The chain runs to 302 residues: Light-independent protochlorophyllide reductase iron-sulfur ATP-binding protein (302 aa).

Residues 1 to 10 show a composition bias toward polar residues; the sequence is MSTATISPSQ. The tract at residues 1–21 is disordered; that stretch reads MSTATISPSQIGRGARPDGEG. ATP-binding positions include 46–51 and K75; that span reads GIGKST. Position 50 (S50) interacts with Mg(2+). [4Fe-4S] cluster-binding residues include C131 and C165. ATP-binding positions include 216-217 and 240-242; these read NR and PAL.

This sequence belongs to the NifH/BchL/ChlL family. As to quaternary structure, homodimer. Protochlorophyllide reductase is composed of three subunits; BchL, BchN and BchB. Requires [4Fe-4S] cluster as cofactor.

The enzyme catalyses chlorophyllide a + oxidized 2[4Fe-4S]-[ferredoxin] + 2 ADP + 2 phosphate = protochlorophyllide a + reduced 2[4Fe-4S]-[ferredoxin] + 2 ATP + 2 H2O. Its pathway is porphyrin-containing compound metabolism; bacteriochlorophyll biosynthesis (light-independent). In terms of biological role, component of the dark-operative protochlorophyllide reductase (DPOR) that uses Mg-ATP and reduced ferredoxin to reduce ring D of protochlorophyllide (Pchlide) to form chlorophyllide a (Chlide). This reaction is light-independent. The L component serves as a unique electron donor to the NB-component of the complex, and binds Mg-ATP. The sequence is that of Light-independent protochlorophyllide reductase iron-sulfur ATP-binding protein from Rubrivivax gelatinosus (strain NBRC 100245 / IL144).